The chain runs to 291 residues: N-acetylmannosamine kinase (291 aa).

ATP-binding positions include 5–12 and 132–139; these read AIDIGGTK and GVGGGVVS. 4 residues coordinate Zn(2+): His-156, Cys-166, Cys-168, and Cys-173.

It belongs to the ROK (NagC/XylR) family. NanK subfamily. Homodimer.

The enzyme catalyses an N-acyl-D-mannosamine + ATP = an N-acyl-D-mannosamine 6-phosphate + ADP + H(+). It functions in the pathway amino-sugar metabolism; N-acetylneuraminate degradation; D-fructose 6-phosphate from N-acetylneuraminate: step 2/5. Catalyzes the phosphorylation of N-acetylmannosamine (ManNAc) to ManNAc-6-P. The chain is N-acetylmannosamine kinase from Escherichia coli O157:H7.